A 205-amino-acid chain; its full sequence is Large ribosomal subunit protein uL3 (205 aa).

Residues 126–150 (GGPKTHGQSDRHRAPGSISSTTTPG) form a disordered region.

The protein belongs to the universal ribosomal protein uL3 family. Part of the 50S ribosomal subunit. Forms a cluster with proteins L14 and L19.

Its function is as follows. One of the primary rRNA binding proteins, it binds directly near the 3'-end of the 23S rRNA, where it nucleates assembly of the 50S subunit. The protein is Large ribosomal subunit protein uL3 of Dehalococcoides mccartyi (strain ATCC BAA-2266 / KCTC 15142 / 195) (Dehalococcoides ethenogenes (strain 195)).